The chain runs to 430 residues: DNA polymerase IV 1 (430 aa).

A UmuC domain is found at 45 to 225 (LAHIDCDAFY…KPVTLIWGVG (181 aa)). 2 residues coordinate Mg(2+): Asp-49 and Asp-142. Glu-143 is a catalytic residue.

Belongs to the DNA polymerase type-Y family. Monomer. It depends on Mg(2+) as a cofactor.

The protein localises to the cytoplasm. The catalysed reaction is DNA(n) + a 2'-deoxyribonucleoside 5'-triphosphate = DNA(n+1) + diphosphate. Poorly processive, error-prone DNA polymerase involved in untargeted mutagenesis. Copies undamaged DNA at stalled replication forks, which arise in vivo from mismatched or misaligned primer ends. These misaligned primers can be extended by PolIV. Exhibits no 3'-5' exonuclease (proofreading) activity. May be involved in translesional synthesis, in conjunction with the beta clamp from PolIII. This is DNA polymerase IV 1 (dinB1) from Rhizobium meliloti (strain 1021) (Ensifer meliloti).